Consider the following 548-residue polypeptide: Sesquiterpene synthase 9 (548 aa).

3 residues coordinate Mg(2+): aspartate 300, aspartate 304, and glutamate 453. The DDXXD motif signature appears at 300–304 (DDTFD).

This sequence belongs to the terpene synthase family. Tpsa subfamily. Mg(2+) is required as a cofactor. It depends on Mn(2+) as a cofactor. In terms of tissue distribution, mostly expressed in stem and trichomes, to a lower extent in roots, leaves and flowers and, at low levels, in fruits.

It is found in the cytoplasm. It carries out the reaction (2E,6E)-farnesyl diphosphate = germacrene C + diphosphate. It catalyses the reaction (2E)-geranyl diphosphate = terpinolene + diphosphate. The catalysed reaction is (2E)-geranyl diphosphate = limonene + diphosphate. The enzyme catalyses (2E)-geranyl diphosphate = beta-myrcene + diphosphate. It carries out the reaction (2Z,6Z)-farnesyl diphosphate = germacrene C + diphosphate. The protein operates within secondary metabolite biosynthesis; terpenoid biosynthesis. Its function is as follows. Involved in the biosynthesis of germacrene C, one of the most abundant sesquiterpene in the leaf oil of tomato. Produces mainly germacrene C, but also smaller amounts of germacrene A, B and D when used with farnesyl diphosphate (FPP) as substrate; able to use both (2E,6E)-farnesyl diphosphate ((EE)-FPP) and (2Z,6Z)-farnesyl diphosphate ((ZZ)-FPP). No or low activity with geranylgeranyl diphosphate (GGPP). Can act with a low efficiency as a monoterpene synthase with geranyl diphosphate (GPP) as substrate, thus producing beta-myrcene, limonene and terpinolene. In Solanum lycopersicum (Tomato), this protein is Sesquiterpene synthase 9.